A 1433-amino-acid polypeptide reads, in one-letter code: Bacillopeptidase F (1433 aa).

The N-terminal stretch at 1–30 is a signal peptide; the sequence is MRKKTKNRLISSVLSTVVISSLLFPGAAGA. Residues 31–194 constitute a propeptide that is removed on maturation; it reads SSKVTSPSVK…NMKKAQKAIK (164 aa). Residues 68-177 form the Inhibitor I9 domain; sequence TFLIKFKDLA…KVLPNEKRQL (110 aa). In terms of domain architecture, Peptidase S8 spans 200–512; sequence EWNVDQIDAP…HGLVNAFDAV (313 aa). Catalysis depends on charge relay system residues Asp227, His274, and Ser452. The propeptide occupies 756-1433; it reads SAYKGQNIQV…NGKLNMNTEN (678 aa). Positions 800 to 830 are disordered; that stretch reads KLGVEKPSGKQKKKPVNPKKAKPSANTAVKH. A compositionally biased stretch (basic residues) spans 808 to 821; the sequence is GKQKKKPVNPKKAK.

The protein belongs to the peptidase S8 family.

The protein localises to the secreted. This Bacillus subtilis (strain 168) protein is Bacillopeptidase F (bpr).